The chain runs to 234 residues: Phosphoribosylaminoimidazole-succinocarboxamide synthase (234 aa).

This sequence belongs to the SAICAR synthetase family.

It carries out the reaction 5-amino-1-(5-phospho-D-ribosyl)imidazole-4-carboxylate + L-aspartate + ATP = (2S)-2-[5-amino-1-(5-phospho-beta-D-ribosyl)imidazole-4-carboxamido]succinate + ADP + phosphate + 2 H(+). It participates in purine metabolism; IMP biosynthesis via de novo pathway; 5-amino-1-(5-phospho-D-ribosyl)imidazole-4-carboxamide from 5-amino-1-(5-phospho-D-ribosyl)imidazole-4-carboxylate: step 1/2. In Staphylococcus aureus (strain COL), this protein is Phosphoribosylaminoimidazole-succinocarboxamide synthase.